A 335-amino-acid chain; its full sequence is Endo-1,4-beta-xylanase S20 (335 aa).

The first 22 residues, 1–22 (MLRKLVTGALAAALLLSGQSNA), serve as a signal peptide directing secretion. Positions 39–241 (NNKNETGNGN…GSGYVDFTYA (203 aa)) constitute a GH11 domain. N-linked (GlcNAc...) asparagine glycans are attached at residues N42 and N78. The active-site Nucleophile is the E134. N-linked (GlcNAc...) asparagine glycosylation is present at N202. The active-site Proton donor is E228. A glycan (N-linked (GlcNAc...) asparagine) is linked at N251. The tract at residues 251-291 (NASAPSNNNNNNNNNNDNNGNWNNWNNNNNNNNNNNNNNNN) is disordered. Residues 257 to 291 (NNNNNNNNNNDNNGNWNNWNNNNNNNNNNNNNNNN) are compositionally biased toward low complexity. In terms of domain architecture, CBM1 spans 300 to 335 (NCAAIWGQCGGSGYNGPKCCKQGSCKQINQWYSQCQ).

Belongs to the glycosyl hydrolase 11 (cellulase G) family.

The protein localises to the secreted. It carries out the reaction Endohydrolysis of (1-&gt;4)-beta-D-xylosidic linkages in xylans.. Its pathway is glycan degradation; xylan degradation. In terms of biological role, endo-1,4-beta-xylanase involved in the hydrolysis of xylan, a major structural heterogeneous polysaccharide found in plant biomass representing the second most abundant polysaccharide in the biosphere, after cellulose. The sequence is that of Endo-1,4-beta-xylanase S20 (xynS20) from Neocallimastix patriciarum (Rumen fungus).